The sequence spans 272 residues: Phosphatidylglycerol--prolipoprotein diacylglyceryl transferase (272 aa).

The next 7 helical transmembrane spans lie at 17–37 (LAIR…LGFG), 59–79 (MLFF…VLFY), 95–115 (WEGG…MWLF), 129–149 (FIAP…FING), 176–196 (SQLY…WLFA), 202–222 (MGAV…AAEF), and 237–257 (LSMG…MVVW). R142 is a binding site for a 1,2-diacyl-sn-glycero-3-phospho-(1'-sn-glycerol).

Belongs to the Lgt family.

The protein localises to the cell inner membrane. It catalyses the reaction L-cysteinyl-[prolipoprotein] + a 1,2-diacyl-sn-glycero-3-phospho-(1'-sn-glycerol) = an S-1,2-diacyl-sn-glyceryl-L-cysteinyl-[prolipoprotein] + sn-glycerol 1-phosphate + H(+). The protein operates within protein modification; lipoprotein biosynthesis (diacylglyceryl transfer). In terms of biological role, catalyzes the transfer of the diacylglyceryl group from phosphatidylglycerol to the sulfhydryl group of the N-terminal cysteine of a prolipoprotein, the first step in the formation of mature lipoproteins. This Cupriavidus necator (strain ATCC 17699 / DSM 428 / KCTC 22496 / NCIMB 10442 / H16 / Stanier 337) (Ralstonia eutropha) protein is Phosphatidylglycerol--prolipoprotein diacylglyceryl transferase.